The sequence spans 346 residues: Dimethyladenosine transferase 1, mitochondrial (346 aa).

A mitochondrion-targeting transit peptide spans 1 to 27 (MAASGKLSTCRLPPLPTIREIIKLLRL). Residues L38, G63, E85, K86, D111, V112, and N141 each contribute to the S-adenosyl-L-methionine site.

It belongs to the class I-like SAM-binding methyltransferase superfamily. rRNA adenine N(6)-methyltransferase family. KsgA subfamily. In terms of assembly, interacts with mitochondrial RNA polymerase POLRMT. Interacts with TFAM. Bound to the maturing mtSSU until the late stages of assembly. Ubiquitously expressed.

The protein resides in the mitochondrion. The enzyme catalyses adenosine(N)/adenosine(N+1) in rRNA + 4 S-adenosyl-L-methionine = N(6)-dimethyladenosine(N)/N(6)-dimethyladenosine(N+1) in rRNA + 4 S-adenosyl-L-homocysteine + 4 H(+). Mitochondrial methyltransferase which uses S-adenosyl methionine to dimethylate two highly conserved adjacent adenosine residues (A1583 and A1584) within the loop of helix 45 at the 3-prime end of 12S rRNA, thereby regulating the assembly or stability of the small subunit of the mitochondrial ribosome. Also required for basal transcription of mitochondrial DNA, probably via its interaction with POLRMT and TFAM. Stimulates transcription independently of the methyltransferase activity. The protein is Dimethyladenosine transferase 1, mitochondrial of Homo sapiens (Human).